The following is a 976-amino-acid chain: Ephrin type-B receptor 4b (976 aa).

The first 23 residues, 1–23 (MDRVCWIMALSWFWMVSTGLVSA), serve as a signal peptide directing secretion. The Extracellular portion of the chain corresponds to 24-541 (EEEVLMNTKL…ESPSRLMLTG (518 aa)). Residues 25-204 (EEVLMNTKLE…FFKKCPAVSR (180 aa)) enclose the Eph LBD domain. 2 cysteine pairs are disulfide-bonded: Cys69-Cys186 and Cys103-Cys113. 2 consecutive Fibronectin type-III domains span residues 326 to 434 (PPSA…TSRD) and 438 to 529 (PVSG…TLPD). Residues 542–562 (VLVAIGLLILIAVVIVAVFCF) traverse the membrane as a helical segment. The Cytoplasmic portion of the chain corresponds to 563–976 (RRSTRRRDPD…LRIHGGSLRY (414 aa)). Residues 613–897 (VKIEEVIGAG…IPDGPSHPLL (285 aa)) form the Protein kinase domain. Residues 619–627 (IGAGEFGEV) and Lys645 contribute to the ATP site. Catalysis depends on Asp738, which acts as the Proton acceptor. Residues 906 to 970 (SHCSSVADWL…LSSVQTLRIH (65 aa)) enclose the SAM domain.

Belongs to the protein kinase superfamily. Tyr protein kinase family. Ephrin receptor subfamily.

The protein localises to the cell membrane. The enzyme catalyses L-tyrosyl-[protein] + ATP = O-phospho-L-tyrosyl-[protein] + ADP + H(+). Its function is as follows. Receptor tyrosine kinase which binds promiscuously transmembrane ephrin-B family ligands residing on adjacent cells, leading to contact-dependent bidirectional signaling into neighboring cells. The signaling pathway downstream of the receptor is referred to as forward signaling while the signaling pathway downstream of the ephrin ligand is referred to as reverse signaling. Together with its cognate ligand/functional ligand EFNB2 is involved in the regulation of cell adhesion and cell migration, and plays a central role in heart morphogenesis, angiogenesis and blood vessel remodeling and permeability. EPHB4-mediated forward signaling controls cellular repulsion and segregation from EFNB2-expressing cells. Involved in somitogenesis. The polypeptide is Ephrin type-B receptor 4b (Danio rerio (Zebrafish)).